The following is a 190-amino-acid chain: MGIKEDNWIRKMAIEEGMIEPFADSQVKLHPETGEKLISYGLSSYGYDLRISREFKVFTNVYNSLVDPKCFTEDALISIVDDVCIIPPNSFALARSVEYFRIPRNVLTVCIGKSTYARCGLIVNVTPFEPEWEGYVTIEISNTTPLPAKVYANEGIAQVLFFEGDAACDVSYAERQGKYQKQQGITIPFV.

113 to 118 (KSTYAR) contacts dCTP. The Proton donor/acceptor role is filled by glutamate 139. Residues glutamine 158, tyrosine 172, lysine 181, and glutamine 182 each contribute to the dCTP site.

Belongs to the dCTP deaminase family. Homotrimer.

It catalyses the reaction dCTP + H2O + H(+) = dUTP + NH4(+). It functions in the pathway pyrimidine metabolism; dUMP biosynthesis; dUMP from dCTP (dUTP route): step 1/2. Its function is as follows. Catalyzes the deamination of dCTP to dUTP. The protein is dCTP deaminase of Chlamydia trachomatis serovar L2 (strain ATCC VR-902B / DSM 19102 / 434/Bu).